A 488-amino-acid polypeptide reads, in one-letter code: GlcNAc-binding protein A (488 aa).

The N-terminal stretch at 1–24 (MIMIITKKTLLPVTLALFSSGVMA) is a signal peptide. In terms of domain architecture, Chitin-binding type-4 spans 25–202 (HGYVSSVEGG…SFYNVIDVMF (178 aa)). Residues 439–480 (AGSKVLATDGRIYECKPFPYSGYCIQWSPSATQFEPGVGSDW) enclose the Chitin-binding type-3 domain.

It belongs to the GbpA family.

It is found in the secreted. Probably interacts with GlcNAc residues. May promote attachment to both epithelial cell surfaces and chitin. This chain is GlcNAc-binding protein A, found in Photobacterium profundum (strain SS9).